A 45-amino-acid polypeptide reads, in one-letter code: Large ribosomal subunit protein bL34 (45 aa).

Residues 1–45 form a disordered region; the sequence is MTKRTFGGTSRKRKRVSGFRVRMRSHTGRRVIKSRRKRGRDRIAV. Over residues 10–45 the composition is skewed to basic residues; that stretch reads SRKRKRVSGFRVRMRSHTGRRVIKSRRKRGRDRIAV.

This sequence belongs to the bacterial ribosomal protein bL34 family.

The sequence is that of Large ribosomal subunit protein bL34 from Prochlorococcus marinus (strain MIT 9515).